A 560-amino-acid polypeptide reads, in one-letter code: Proline--tRNA ligase (560 aa).

This sequence belongs to the class-II aminoacyl-tRNA synthetase family. ProS type 1 subfamily. In terms of assembly, homodimer.

The protein localises to the cytoplasm. It carries out the reaction tRNA(Pro) + L-proline + ATP = L-prolyl-tRNA(Pro) + AMP + diphosphate. Functionally, catalyzes the attachment of proline to tRNA(Pro) in a two-step reaction: proline is first activated by ATP to form Pro-AMP and then transferred to the acceptor end of tRNA(Pro). As ProRS can inadvertently accommodate and process non-cognate amino acids such as alanine and cysteine, to avoid such errors it has two additional distinct editing activities against alanine. One activity is designated as 'pretransfer' editing and involves the tRNA(Pro)-independent hydrolysis of activated Ala-AMP. The other activity is designated 'posttransfer' editing and involves deacylation of mischarged Ala-tRNA(Pro). The misacylated Cys-tRNA(Pro) is not edited by ProRS. The polypeptide is Proline--tRNA ligase (Vesicomyosocius okutanii subsp. Calyptogena okutanii (strain HA)).